A 172-amino-acid chain; its full sequence is Adenine phosphoribosyltransferase (172 aa).

The protein belongs to the purine/pyrimidine phosphoribosyltransferase family. As to quaternary structure, homodimer.

Its subcellular location is the cytoplasm. It catalyses the reaction AMP + diphosphate = 5-phospho-alpha-D-ribose 1-diphosphate + adenine. Its pathway is purine metabolism; AMP biosynthesis via salvage pathway; AMP from adenine: step 1/1. Catalyzes a salvage reaction resulting in the formation of AMP, that is energically less costly than de novo synthesis. This is Adenine phosphoribosyltransferase from Microcystis aeruginosa (strain NIES-843 / IAM M-2473).